The chain runs to 338 residues: RNA 3'-terminal phosphate cyclase (338 aa).

ATP-binding positions include Gln103 and 283 to 287 (YLADQ). His308 functions as the Tele-AMP-histidine intermediate in the catalytic mechanism.

It belongs to the RNA 3'-terminal cyclase family. Type 1 subfamily.

The protein resides in the cytoplasm. It carries out the reaction a 3'-end 3'-phospho-ribonucleotide-RNA + ATP = a 3'-end 2',3'-cyclophospho-ribonucleotide-RNA + AMP + diphosphate. In terms of biological role, catalyzes the conversion of 3'-phosphate to a 2',3'-cyclic phosphodiester at the end of RNA. The mechanism of action of the enzyme occurs in 3 steps: (A) adenylation of the enzyme by ATP; (B) transfer of adenylate to an RNA-N3'P to produce RNA-N3'PP5'A; (C) and attack of the adjacent 2'-hydroxyl on the 3'-phosphorus in the diester linkage to produce the cyclic end product. The biological role of this enzyme is unknown but it is likely to function in some aspects of cellular RNA processing. The protein is RNA 3'-terminal phosphate cyclase of Escherichia coli (strain SMS-3-5 / SECEC).